Here is a 1061-residue protein sequence, read N- to C-terminus: TonB-dependent transporter Oar (1061 aa).

An N-terminal signal peptide occupies residues 1-26; the sequence is MHLNRVLRETGVVVAAGLLYGSAAFA. Positions 121 to 243 constitute a TBDR plug domain; that stretch reads EIVGAPPTID…TGGVINAVTR (123 aa). The region spanning 248–1061 is the TBDR beta-barrel domain; it reads EFHGSVFANW…QVRFGIRYTF (814 aa). Positions 701–722 are disordered; the sequence is RSLAEPGQGTATSCDPSSFESQ. A compositionally biased stretch (polar residues) spans 709–722; sequence GTATSCDPSSFESQ.

Belongs to the TonB-dependent receptor family. Interacts with TonB. Part of a transport system composed of the outer membrane transporter Oar, the trans-periplasmic binding protein TonB and the inner membrane proteins ExbB and ExbD.

The protein resides in the cell outer membrane. Required for secretion of the protease PopC across the bacterial outer membrane. Binds and probably transports PopC from the periplasm to the extracellular milieu. It derives its energy for transport by interacting with the trans-periplasmic membrane protein TonB. Required for cellular adhesion during fruiting body formation, a multicellular developmental program that is induced in response to starvation. This Myxococcus xanthus protein is TonB-dependent transporter Oar.